Reading from the N-terminus, the 267-residue chain is LysM and putative peptidoglycan-binding domain-containing protein 4 (267 aa).

The Extracellular portion of the chain corresponds to 1-211 (MRRGDPPPRA…RSNGADWGIQ (211 aa)). Residues 30–64 (HRQEEPEASSEDEELNVMELRPRSRDSSSKEKEGV) form a disordered region. Positions 35-45 (PEASSEDEELN) are enriched in acidic residues. Positions 49-64 (LRPRSRDSSSKEKEGV) are enriched in basic and acidic residues. The LysM domain maps to 70–114 (LERDISHEDNLSKLALQYGCKVADIKRVNNLFQEQDMYALKSIKI). Asn-79 carries an N-linked (GlcNAc...) asparagine glycan. Positions 130-152 (RTPQQRPSHDAAPSNSAMASVSG) are disordered. The segment covering 142–152 (PSNSAMASVSG) has biased composition (polar residues). The chain crosses the membrane as a helical span at residues 212–232 (WWNAVIAMLLIGIVLPIFYVV). Over 233 to 267 (YYKTKDSGESAVDNVGVNISVSTSNSTREYNGKSP) the chain is Cytoplasmic.

The protein localises to the membrane. This is LysM and putative peptidoglycan-binding domain-containing protein 4 (lysmd4) from Danio rerio (Zebrafish).